The following is a 310-amino-acid chain: Ribosomal RNA small subunit methyltransferase H (310 aa).

Residues 33–35 (GGH), Asp-52, Phe-79, Asp-98, and Gln-105 contribute to the S-adenosyl-L-methionine site.

Belongs to the methyltransferase superfamily. RsmH family.

It localises to the cytoplasm. It carries out the reaction cytidine(1402) in 16S rRNA + S-adenosyl-L-methionine = N(4)-methylcytidine(1402) in 16S rRNA + S-adenosyl-L-homocysteine + H(+). Specifically methylates the N4 position of cytidine in position 1402 (C1402) of 16S rRNA. The chain is Ribosomal RNA small subunit methyltransferase H from Campylobacter jejuni subsp. doylei (strain ATCC BAA-1458 / RM4099 / 269.97).